The chain runs to 921 residues: Isoleucine--tRNA ligase (921 aa).

The short motif at 57–67 (PYANGNIHVGT) is the 'HIGH' region element. E551 is a binding site for L-isoleucyl-5'-AMP. A 'KMSKS' region motif is present at residues 592-596 (KMSKS). K595 lines the ATP pocket. Zn(2+) is bound by residues C885, C888, C905, and C908.

The protein belongs to the class-I aminoacyl-tRNA synthetase family. IleS type 1 subfamily. Monomer. Zn(2+) serves as cofactor.

Its subcellular location is the cytoplasm. The catalysed reaction is tRNA(Ile) + L-isoleucine + ATP = L-isoleucyl-tRNA(Ile) + AMP + diphosphate. Its function is as follows. Catalyzes the attachment of isoleucine to tRNA(Ile). As IleRS can inadvertently accommodate and process structurally similar amino acids such as valine, to avoid such errors it has two additional distinct tRNA(Ile)-dependent editing activities. One activity is designated as 'pretransfer' editing and involves the hydrolysis of activated Val-AMP. The other activity is designated 'posttransfer' editing and involves deacylation of mischarged Val-tRNA(Ile). The polypeptide is Isoleucine--tRNA ligase (Kosmotoga olearia (strain ATCC BAA-1733 / DSM 21960 / TBF 19.5.1)).